Consider the following 675-residue polypeptide: Mitochondrial distribution and morphology protein 12 (675 aa).

The region spanning 1 to 675 (MSIDLNWDTV…VYPSFWTFLV (675 aa)) is the SMP-LTD domain. Disordered stretches follow at residues 66 to 186 (LPDF…GTNH), 241 to 270 (GPSW…GAGG), 307 to 327 (GTGK…PLGT), 365 to 390 (TGPR…VAPA), and 444 to 517 (PKQG…RFRE). The span at 78–101 (SSEESDSEEEVAYENEGEYLDDPV) shows a compositional bias: acidic residues. Residues 123 to 137 (NSSTGSRNGSGPNSG) are compositionally biased toward low complexity. The span at 261 to 270 (GGAGGGGAGG) shows a compositional bias: gly residues. Low complexity predominate over residues 317–327 (PLTGTSTPLGT). Composition is skewed to polar residues over residues 373-382 (PSSQSLNSVG) and 454-469 (VSTL…NNRA). Residues 497 to 510 (EPEEDEEEEEEGEE) show a composition bias toward acidic residues.

The protein belongs to the MDM12 family. In terms of assembly, component of the ER-mitochondria encounter structure (ERMES) or MDM complex, composed of mmm-1, mdm10, mdm12 and mdm34. A mmm-1 homodimer associates with one molecule of mdm12 on each side in a pairwise head-to-tail manner, and the SMP-LTD domains of mmm-1 and mdm12 generate a continuous hydrophobic tunnel for phospholipid trafficking.

It is found in the mitochondrion outer membrane. The protein resides in the endoplasmic reticulum membrane. Functionally, component of the ERMES/MDM complex, which serves as a molecular tether to connect the endoplasmic reticulum (ER) and mitochondria. Components of this complex are involved in the control of mitochondrial shape and protein biogenesis, and function in nonvesicular lipid trafficking between the ER and mitochondria. Mdm12 is required for the interaction of the ER-resident membrane protein MMM1 and the outer mitochondrial membrane-resident beta-barrel protein mdm10. The mdm12-mmm-1 subcomplex functions in the major beta-barrel assembly pathway that is responsible for biogenesis of all mitochondrial outer membrane beta-barrel proteins, and acts in a late step after the SAM complex. The mdm10-mdm12-mmm-1 subcomplex further acts in the TOM40-specific pathway after the action of the mdm12-mmm1 complex. Essential for establishing and maintaining the structure of mitochondria and maintenance of mtDNA nucleoids. The sequence is that of Mitochondrial distribution and morphology protein 12 from Neurospora crassa (strain ATCC 24698 / 74-OR23-1A / CBS 708.71 / DSM 1257 / FGSC 987).